A 333-amino-acid chain; its full sequence is Coiled-coil domain-containing protein 68 (333 aa).

Coiled-coil stretches lie at residues 86-120 (LDLL…SREA) and 160-302 (EKEQ…HWTE).

Interacts with CEP170.

Its subcellular location is the cytoplasm. It localises to the cytoskeleton. The protein resides in the microtubule organizing center. It is found in the centrosome. The protein localises to the centriole. In terms of biological role, centriolar protein required for centriole subdistal appendage assembly and microtubule anchoring in interphase cells. Together with CCDC120, cooperate with subdistal appendage components ODF2, NIN and CEP170 for hierarchical subdistal appendage assembly. This chain is Coiled-coil domain-containing protein 68 (Ccdc68), found in Mus musculus (Mouse).